Consider the following 432-residue polypeptide: Phosphoprotein associated with glycosphingolipid-enriched microdomains 1 (432 aa).

Residues 1 to 16 lie on the Extracellular side of the membrane; the sequence is MGPAGSLLGSGQMQIT. The helical; Signal-anchor for type III membrane protein transmembrane segment at 17–37 threads the bilayer; sequence LWGSLAAVAIFFVITFLIFLC. Residues Cys-37 and Cys-40 are each lipidated (S-palmitoyl cysteine). The Cytoplasmic segment spans residues 38 to 432; the sequence is SSCDREKKPR…LQQGRDITRL (395 aa). Residues Ser-50 and Ser-61 each carry the phosphoserine modification. Position 105 is a phosphotyrosine; by LYN (Tyr-105). The segment covering 110–122 has biased composition (polar residues); that stretch reads TSASDLLDSQDST. The interval 110 to 137 is disordered; the sequence is TSASDLLDSQDSTGKPKCHQSRELPRIP. 3 positions are modified to phosphotyrosine: Tyr-163, Tyr-181, and Tyr-227. Disordered regions lie at residues 197–230 and 244–432; these read EKGHSGKAKSTSASKELPGPQTEGKAEFAEYASV and SILG…ITRL. Over residues 220–230 the composition is skewed to basic and acidic residues; it reads GKAEFAEYASV. Phosphoserine is present on Ser-229. Polar residues predominate over residues 316–356; that stretch reads MYSSVNKPGQLVNKSGQSLTVPESTYTSIQGDPQRSPSSCN. At Tyr-317 the chain carries Phosphotyrosine; by FYN and LYN. Residues 317–320 form an interaction with CSK region; it reads YSSV. Ser-354 carries the phosphoserine modification. At Tyr-359 the chain carries Phosphotyrosine. Ser-380 is subject to Phosphoserine. 2 positions are modified to phosphotyrosine: Tyr-387 and Tyr-417. The segment at 430–432 is interaction with NHERF1; sequence TRL.

As to quaternary structure, interacts with FYN. When phosphorylated, interacts with CSK. Interacts with NHERF1/EBP50. In resting T-cells, part of a PAG1-NHERF1-MSN complex which is disrupted upon TCR activation. Interacts with LYN on plasma membrane lipid rafts. Identified in a complex with LYN and STAT3. In terms of processing, palmitoylated. Post-translationally, phosphorylated by FYN on Tyr-317 in resting T-cells; which promotes interaction with CSK. Dephosphorylated by PTPRC/CD45 upon TCR activation; which leads to CSK dissociation. May also be dephosphorylated by PTPN11. Hyperphosphorylated in mast cells upon FCER1 activation. Phosphorylated by LYN. In terms of tissue distribution, ubiquitously expressed. Present in germinal center B-cells, plasma cells, T-cells, monocytes and platelets (at protein level).

Its subcellular location is the cell membrane. In terms of biological role, negatively regulates TCR (T-cell antigen receptor)-mediated signaling in T-cells and FCER1 (high affinity immunoglobulin epsilon receptor)-mediated signaling in mast cells. Promotes CSK activation and recruitment to lipid rafts, which results in LCK inhibition. Inhibits immunological synapse formation by preventing dynamic arrangement of lipid raft proteins. May be involved in cell adhesion signaling. The protein is Phosphoprotein associated with glycosphingolipid-enriched microdomains 1 (PAG1) of Homo sapiens (Human).